We begin with the raw amino-acid sequence, 247 residues long: Pyridoxine 5'-phosphate synthase (247 aa).

Asn9 serves as a coordination point for 3-amino-2-oxopropyl phosphate. Asp11–His12 is a 1-deoxy-D-xylulose 5-phosphate binding site. Arg20 contacts 3-amino-2-oxopropyl phosphate. The active-site Proton acceptor is the His45. Arg47 and His52 together coordinate 1-deoxy-D-xylulose 5-phosphate. Glu72 acts as the Proton acceptor in catalysis. A 1-deoxy-D-xylulose 5-phosphate-binding site is contributed by Thr102. His193 functions as the Proton donor in the catalytic mechanism. 3-amino-2-oxopropyl phosphate-binding positions include Gly194 and Gly215 to His216.

The protein belongs to the PNP synthase family. As to quaternary structure, homooctamer; tetramer of dimers.

The protein localises to the cytoplasm. The catalysed reaction is 3-amino-2-oxopropyl phosphate + 1-deoxy-D-xylulose 5-phosphate = pyridoxine 5'-phosphate + phosphate + 2 H2O + H(+). It participates in cofactor biosynthesis; pyridoxine 5'-phosphate biosynthesis; pyridoxine 5'-phosphate from D-erythrose 4-phosphate: step 5/5. Catalyzes the complicated ring closure reaction between the two acyclic compounds 1-deoxy-D-xylulose-5-phosphate (DXP) and 3-amino-2-oxopropyl phosphate (1-amino-acetone-3-phosphate or AAP) to form pyridoxine 5'-phosphate (PNP) and inorganic phosphate. The protein is Pyridoxine 5'-phosphate synthase of Blochmanniella floridana.